We begin with the raw amino-acid sequence, 206 residues long: Probable N-acetyltransferase 14 (206 aa).

The N-acetyltransferase domain occupies 55-206 (LRFVLASFAL…TLVREFSKDL (152 aa)). The chain crosses the membrane as a helical span at residues 57-77 (FVLASFALALLLPVFLAVTAV).

This sequence belongs to the camello family.

The protein localises to the membrane. In terms of biological role, probable acetyltransferase. May act as a transcription factor regulating the expression of coproporphyrinogen oxidase by binding to a promoter regulatory element. The polypeptide is Probable N-acetyltransferase 14 (NAT14) (Macaca fascicularis (Crab-eating macaque)).